A 371-amino-acid chain; its full sequence is Protease PrtS (371 aa).

Residue His169 participates in Zn(2+) binding. Glu170 is a catalytic residue. Zn(2+) contacts are provided by His173 and Glu193. The Proton donor role is filled by His273. The interval Lys352–Val371 is disordered.

Belongs to the peptidase M4 family. Requires Zn(2+) as cofactor.

The protein resides in the secreted. Its activity is regulated as follows. Inhibited by 8 mM 1,10-phenanthroline, but not by EDTA or PMSF. Functionally, metalloprotease involved in the inhibition of insect antibacterial peptides. Reduces the antibacterial activity of G.mellonella hemolymph by 50%. Reduces the antibacterial activity of cecropin A by 80% and completely inhibits cecropin B. The polypeptide is Protease PrtS (Photorhabdus sp. (strain Az29)).